The sequence spans 378 residues: Cytochrome b (378 aa).

The next 4 helical transmembrane spans lie at F34–M54, W78–V99, W114–L134, and F179–L199. H84 and H98 together coordinate heme b. Residues H183 and H197 each coordinate heme b. Position 202 (H202) interacts with a ubiquinone. 4 helical membrane passes run Y227–F247, L289–H309, L321–A341, and Y348–L368.

The protein belongs to the cytochrome b family. The main subunits of complex b-c1 are: cytochrome b, cytochrome c1 and the Rieske protein. It depends on heme b as a cofactor.

Its subcellular location is the mitochondrion inner membrane. Its function is as follows. Component of the ubiquinol-cytochrome c reductase complex (complex III or cytochrome b-c1 complex) that is part of the mitochondrial respiratory chain. The b-c1 complex mediates electron transfer from ubiquinol to cytochrome c. Contributes to the generation of a proton gradient across the mitochondrial membrane that is then used for ATP synthesis. The protein is Cytochrome b (mt:Cyt-b) of Anopheles gambiae (African malaria mosquito).